A 368-amino-acid chain; its full sequence is Flagellar P-ring protein (368 aa).

The first 22 residues, 1 to 22, serve as a signal peptide directing secretion; that stretch reads MLIPLARAVLALELLGAGAAHA.

The protein belongs to the FlgI family. As to quaternary structure, the basal body constitutes a major portion of the flagellar organelle and consists of four rings (L,P,S, and M) mounted on a central rod.

The protein localises to the periplasm. Its subcellular location is the bacterial flagellum basal body. Assembles around the rod to form the L-ring and probably protects the motor/basal body from shearing forces during rotation. The chain is Flagellar P-ring protein from Bordetella pertussis (strain Tohama I / ATCC BAA-589 / NCTC 13251).